Here is a 322-residue protein sequence, read N- to C-terminus: 4-hydroxy-3-methylbut-2-enyl diphosphate reductase 1 (322 aa).

Residue Cys18 coordinates [4Fe-4S] cluster. (2E)-4-hydroxy-3-methylbut-2-enyl diphosphate contacts are provided by His47 and His82. Dimethylallyl diphosphate contacts are provided by His47 and His82. 2 residues coordinate isopentenyl diphosphate: His47 and His82. Cys104 provides a ligand contact to [4Fe-4S] cluster. Residue His132 coordinates (2E)-4-hydroxy-3-methylbut-2-enyl diphosphate. His132 is a dimethylallyl diphosphate binding site. His132 is a binding site for isopentenyl diphosphate. Residue Glu134 is the Proton donor of the active site. Thr173 contributes to the (2E)-4-hydroxy-3-methylbut-2-enyl diphosphate binding site. Cys203 is a binding site for [4Fe-4S] cluster. (2E)-4-hydroxy-3-methylbut-2-enyl diphosphate-binding residues include Ser231, Ser232, Asn233, and Ser276. Dimethylallyl diphosphate-binding residues include Ser231, Ser232, Asn233, and Ser276. The isopentenyl diphosphate site is built by Ser231, Ser232, Asn233, and Ser276.

It belongs to the IspH family. [4Fe-4S] cluster serves as cofactor.

The catalysed reaction is isopentenyl diphosphate + 2 oxidized [2Fe-2S]-[ferredoxin] + H2O = (2E)-4-hydroxy-3-methylbut-2-enyl diphosphate + 2 reduced [2Fe-2S]-[ferredoxin] + 2 H(+). The enzyme catalyses dimethylallyl diphosphate + 2 oxidized [2Fe-2S]-[ferredoxin] + H2O = (2E)-4-hydroxy-3-methylbut-2-enyl diphosphate + 2 reduced [2Fe-2S]-[ferredoxin] + 2 H(+). The protein operates within isoprenoid biosynthesis; dimethylallyl diphosphate biosynthesis; dimethylallyl diphosphate from (2E)-4-hydroxy-3-methylbutenyl diphosphate: step 1/1. Its pathway is isoprenoid biosynthesis; isopentenyl diphosphate biosynthesis via DXP pathway; isopentenyl diphosphate from 1-deoxy-D-xylulose 5-phosphate: step 6/6. Functionally, catalyzes the conversion of 1-hydroxy-2-methyl-2-(E)-butenyl 4-diphosphate (HMBPP) into a mixture of isopentenyl diphosphate (IPP) and dimethylallyl diphosphate (DMAPP). Acts in the terminal step of the DOXP/MEP pathway for isoprenoid precursor biosynthesis. In Bradyrhizobium diazoefficiens (strain JCM 10833 / BCRC 13528 / IAM 13628 / NBRC 14792 / USDA 110), this protein is 4-hydroxy-3-methylbut-2-enyl diphosphate reductase 1.